A 180-amino-acid chain; its full sequence is Large ribosomal subunit protein uL6 (180 aa).

Belongs to the universal ribosomal protein uL6 family. Part of the 50S ribosomal subunit.

In terms of biological role, this protein binds to the 23S rRNA, and is important in its secondary structure. It is located near the subunit interface in the base of the L7/L12 stalk, and near the tRNA binding site of the peptidyltransferase center. The sequence is that of Large ribosomal subunit protein uL6 from Borrelia duttonii (strain Ly).